A 468-amino-acid polypeptide reads, in one-letter code: Citrate synthase, mitochondrial (468 aa).

The N-terminal 30 residues, 1–30 (MSFLSISRLAPRLLSSKNAACVVVAARNAS), are a transit peptide targeting the mitochondrion. Catalysis depends on residues His303 and His349. Arg358 provides a ligand contact to oxaloacetate. The active site involves Asp404. Arg430 and Arg450 together coordinate oxaloacetate.

Belongs to the citrate synthase family. As to quaternary structure, homodimer.

Its subcellular location is the mitochondrion matrix. The catalysed reaction is oxaloacetate + acetyl-CoA + H2O = citrate + CoA + H(+). It participates in carbohydrate metabolism; tricarboxylic acid cycle; isocitrate from oxaloacetate: step 1/2. Key enzyme of the Krebs tricarboxylic acid cycle which catalyzes the synthesis of citrate from acetyl coenzyme A and oxaloacetate. The protein is Citrate synthase, mitochondrial (cs) of Danio rerio (Zebrafish).